A 148-amino-acid chain; its full sequence is MAQMTVQVVTPDGLKYDHHASFIHAVTKDGQIGILPGHINLIAPLEVDELKVRRVDDESHVDWIAVNGGIIEVKDDFITIIANSAERDRDIDVSRAERAKQRAERVLEEETKRVLEEATKSDRNDDVQRAQIALRRALNRINVGTKIR.

The protein belongs to the ATPase epsilon chain family. As to quaternary structure, F-type ATPases have 2 components, CF(1) - the catalytic core - and CF(0) - the membrane proton channel. CF(1) has five subunits: alpha(3), beta(3), gamma(1), delta(1), epsilon(1). CF(0) has three main subunits: a, b and c.

The protein localises to the cell membrane. Functionally, produces ATP from ADP in the presence of a proton gradient across the membrane. This is ATP synthase epsilon chain from Streptococcus thermophilus (strain ATCC BAA-491 / LMD-9).